The primary structure comprises 156 residues: Arginine repressor (156 aa).

This sequence belongs to the ArgR family.

The protein resides in the cytoplasm. It participates in amino-acid biosynthesis; L-arginine biosynthesis [regulation]. In terms of biological role, regulates arginine biosynthesis genes. This is Arginine repressor from Shewanella halifaxensis (strain HAW-EB4).